Reading from the N-terminus, the 307-residue chain is Putative serine/threonine-protein phosphatase C22H10.04 (307 aa).

Residues aspartate 51, histidine 53, aspartate 79, and asparagine 111 each contribute to the Mn(2+) site. The active-site Proton donor is the histidine 112. Mn(2+) is bound by residues histidine 161 and histidine 236.

Belongs to the PPP phosphatase family. PP-X subfamily. Mn(2+) serves as cofactor.

It carries out the reaction O-phospho-L-seryl-[protein] + H2O = L-seryl-[protein] + phosphate. The catalysed reaction is O-phospho-L-threonyl-[protein] + H2O = L-threonyl-[protein] + phosphate. The chain is Putative serine/threonine-protein phosphatase C22H10.04 from Schizosaccharomyces pombe (strain 972 / ATCC 24843) (Fission yeast).